Reading from the N-terminus, the 87-residue chain is MMSTQHFILSLTILIIISNLHDEVNACRELGEECVTRGPKSCCEPLICGLKSHGTGVCVKCIPGGSECKKSEDCCSKRCKSGYCKFK.

The N-terminal stretch at 1-26 (MMSTQHFILSLTILIIISNLHDEVNA) is a signal peptide. Intrachain disulfides connect Cys61–Cys75, Cys68–Cys79, and Cys74–Cys84.

The protein localises to the secreted. This is an uncharacterized protein from Schistosoma japonicum (Blood fluke).